Here is a 633-residue protein sequence, read N- to C-terminus: E3 ubiquitin-protein ligase ZSWIM2 (633 aa).

An SWIM-type zinc finger spans residues 54 to 87 (FRVFLGNPHVCNCSTFPKGGELCKHICWVLLKKF). Residues 147–198 (CSICQELLLEKKLPVTFCRFGCGNSIHIKCMKILANYQSTSNTSMLKCPLCR) form an RING-type 1 zinc finger. The ZZ-type zinc-finger motif lies at 229 to 280 (HLGIPCNNCKQFPIEGKCYKCTECIEYHLCQECFDSCCHLSHTFTFREKRNQ). Residues cysteine 234, cysteine 237, cysteine 249, cysteine 252, cysteine 258, cysteine 261, histidine 267, and histidine 270 each coordinate Zn(2+). The RING-type 2 zinc finger occupies 344 to 388 (CLLCLKAFHLGQHTRLLPCTHKFHRKCIDNWLFHKCNSCPIDGQV).

Dimer. Interacts with UBE2D1. In terms of processing, polyubiquitinated. Polyubiquitination is followed by degradation via the proteasome. As to expression, expression is testis-specific.

The enzyme catalyses S-ubiquitinyl-[E2 ubiquitin-conjugating enzyme]-L-cysteine + [acceptor protein]-L-lysine = [E2 ubiquitin-conjugating enzyme]-L-cysteine + N(6)-ubiquitinyl-[acceptor protein]-L-lysine.. Functionally, E3 ubiquitin-protein ligase involved in the regulation of Fas-, DR3- and DR4-mediated apoptosis. Functions in conjunction with the UBE2D1, UBE2D3 and UBE2E1 E2 ubiquitin-conjugating enzymes. This chain is E3 ubiquitin-protein ligase ZSWIM2, found in Homo sapiens (Human).